The sequence spans 773 residues: Probable serine/threonine-protein kinase MARK-C (773 aa).

The span at 1–27 (MESNKSSSHGDVSTSPSFLNNHHQFNN) shows a compositional bias: polar residues. The tract at residues 1–32 (MESNKSSSHGDVSTSPSFLNNHHQFNNGGDII) is disordered. Residues 46–300 (YEVGKTLGNG…IQELKNHPWT (255 aa)) form the Protein kinase domain. ATP-binding positions include 52–60 (LGNGTFGKV) and Lys-75. Catalysis depends on Asp-171, which acts as the Proton acceptor. Positions 362 to 390 (RYASKEVENLKSKLELLSKRKKSFSDKRN) form a coiled coil. 3 disordered regions span residues 382-445 (KKSF…SQGS), 462-487 (DNDI…NKDI), and 558-588 (YSIQ…TNLR). Low complexity predominate over residues 405 to 443 (DLSSNNNNNQQQQNSPPSKTNSSSTSSSNRESNNNSPSQ). A coiled-coil region spans residues 445-474 (SIKEISLDELDNHIEQLDNDIENSDNNKSS). Over residues 468 to 478 (SDNNKSSSLTR) the composition is skewed to polar residues. Low complexity predominate over residues 561 to 573 (QQQQLQQQQQQQQ). Residues 724–773 (CFDEDNSVKFQIEIVKICNLDLTGIQLKRLSGDTWKYKDICTELVESMKL) enclose the KA1 domain.

This sequence belongs to the protein kinase superfamily. CAMK Ser/Thr protein kinase family. SNF1 subfamily.

The catalysed reaction is L-seryl-[protein] + ATP = O-phospho-L-seryl-[protein] + ADP + H(+). It catalyses the reaction L-threonyl-[protein] + ATP = O-phospho-L-threonyl-[protein] + ADP + H(+). The polypeptide is Probable serine/threonine-protein kinase MARK-C (mrkC) (Dictyostelium discoideum (Social amoeba)).